The sequence spans 188 residues: Inner membrane-spanning protein YciB (188 aa).

5 consecutive transmembrane segments (helical) span residues 22–42, 50–70, 72–92, 121–141, and 149–169; these read IYIA…VTWM, MTLV…VFHN, LFIK…LLVS, FAWA…AFWL, and FKVF…GVYI.

Belongs to the YciB family.

The protein resides in the cell inner membrane. Functionally, plays a role in cell envelope biogenesis, maintenance of cell envelope integrity and membrane homeostasis. The chain is Inner membrane-spanning protein YciB from Pectobacterium carotovorum subsp. carotovorum (strain PC1).